The following is a 71-amino-acid chain: Sec-independent protein translocase protein TatA (71 aa).

Residues 1–21 (MGSFSIWHWLIVLVIVALIFG) traverse the membrane as a helical segment. Residues 48 to 71 (ADKTEQVTQQQTTIDVQAKEKQNS) form a disordered region.

This sequence belongs to the TatA/E family. In terms of assembly, the Tat system comprises two distinct complexes: a TatABC complex, containing multiple copies of TatA, TatB and TatC subunits, and a separate TatA complex, containing only TatA subunits. Substrates initially bind to the TatABC complex, which probably triggers association of the separate TatA complex to form the active translocon.

It localises to the cell inner membrane. Its function is as follows. Part of the twin-arginine translocation (Tat) system that transports large folded proteins containing a characteristic twin-arginine motif in their signal peptide across membranes. TatA could form the protein-conducting channel of the Tat system. The chain is Sec-independent protein translocase protein TatA from Bordetella avium (strain 197N).